The chain runs to 93 residues: Alpha-defensin 16 (93 aa).

The signal sequence occupies residues 1-19; sequence MKTLILLSALVLLAFQVQA. The propeptide occupies 20-58; that stretch reads DPIQNTDEETKTEEQPGEEDQAVSVSFGDPEGTSLQEES. The interval 22 to 54 is disordered; it reads IQNTDEETKTEEQPGEEDQAVSVSFGDPEGTSL. Intrachain disulfides connect C64-C92, C66-C81, and C71-C91.

This sequence belongs to the alpha-defensin family. In terms of tissue distribution, paneth cells of the small bowel.

It localises to the secreted. Functionally, probably contributes to the antimicrobial barrier function of the small bowel mucosa. This chain is Alpha-defensin 16 (Defa16), found in Mus musculus (Mouse).